We begin with the raw amino-acid sequence, 243 residues long: Venom nerve growth factor (243 aa).

The N-terminal stretch at 1 to 18 (MSMLCYTLIIAFLIGIWA) is a signal peptide. The propeptide occupies 19-125 (APKSEDNVPL…TLNRNIRTKR (107 aa)). Residues 45 to 66 (HEGLKTSRNTDQRHLAPKKAED) are disordered. Basic and acidic residues predominate over residues 46–66 (EGLKTSRNTDQRHLAPKKAED). Intrachain disulfides connect C139-C204, C182-C232, and C192-C234. N-linked (GlcNAc...) asparagine glycosylation is present at N148.

This sequence belongs to the NGF-beta family. As to quaternary structure, homodimer; non-covalently linked. As to expression, expressed by the venom gland.

It is found in the secreted. Nerve growth factor is important for the development and maintenance of the sympathetic and sensory nervous systems. It stimulates division and differentiation of sympathetic and embryonic sensory neurons as well as basal forebrain cholinergic neurons in the brain. Its relevance in the snake venom is not clear. However, it has been shown to inhibit metalloproteinase-dependent proteolysis of platelet glycoprotein Ib alpha, suggesting a metalloproteinase inhibition to prevent metalloprotease autodigestion and/or protection against prey proteases. Binds a lipid between the two protein chains in the homodimer. The lipid-bound form promotes histamine relase from mouse mast cells, contrary to the lipid-free form. This Cryptophis nigrescens (Eastern small-eyed snake) protein is Venom nerve growth factor.